Here is a 235-residue protein sequence, read N- to C-terminus: Protein C1orf43 homolog (235 aa).

Residues 11–31 (VNVVLVMAYGSLVFVLLFIFV) traverse the membrane as a helical segment.

The protein localises to the membrane. The protein resides in the golgi apparatus. It localises to the mitochondrion. General regulator of phagocytosis. Required to uptake Gram negative bacterium by macrophages. In Rattus norvegicus (Rat), this protein is Protein C1orf43 homolog.